Reading from the N-terminus, the 413-residue chain is Arginine biosynthesis bifunctional protein ArgJ (413 aa).

Thr158, Lys184, Thr195, Glu285, Asn408, and Ser413 together coordinate substrate. The active-site Nucleophile is the Thr195.

It belongs to the ArgJ family. Heterotetramer of two alpha and two beta chains.

The protein resides in the cytoplasm. It catalyses the reaction N(2)-acetyl-L-ornithine + L-glutamate = N-acetyl-L-glutamate + L-ornithine. The catalysed reaction is L-glutamate + acetyl-CoA = N-acetyl-L-glutamate + CoA + H(+). It participates in amino-acid biosynthesis; L-arginine biosynthesis; L-ornithine and N-acetyl-L-glutamate from L-glutamate and N(2)-acetyl-L-ornithine (cyclic): step 1/1. Its pathway is amino-acid biosynthesis; L-arginine biosynthesis; N(2)-acetyl-L-ornithine from L-glutamate: step 1/4. Catalyzes two activities which are involved in the cyclic version of arginine biosynthesis: the synthesis of N-acetylglutamate from glutamate and acetyl-CoA as the acetyl donor, and of ornithine by transacetylation between N(2)-acetylornithine and glutamate. The polypeptide is Arginine biosynthesis bifunctional protein ArgJ (Brucella melitensis biotype 1 (strain ATCC 23456 / CCUG 17765 / NCTC 10094 / 16M)).